Here is a 224-residue protein sequence, read N- to C-terminus: MIKYIALASVVLLVGCSSTAKKPIADDPFYAPVYPDTVPTQVAATGSIYLDSQASSLYSDIRAHRVGDIITVTLKESTQASKSANNEIKKGSDLSVEPVYAGGKNISISGVPIDLGYSDSMNTKRESDADQSNSLDGSISANIIQVLSNGNLVIRGEKWISINNGDEFIRVTGMIRSEDINPDNTIDSTRVANARIQYSGTGTFADSQKVGWLSSFFMSDWWPF.

A signal peptide spans 1-15 (MIKYIALASVVLLVG). C16 carries N-palmitoyl cysteine lipidation. Residue C16 is the site of S-diacylglycerol cysteine attachment.

The protein belongs to the FlgH family. The basal body constitutes a major portion of the flagellar organelle and consists of four rings (L,P,S, and M) mounted on a central rod.

The protein resides in the cell outer membrane. Its subcellular location is the bacterial flagellum basal body. Its function is as follows. Assembles around the rod to form the L-ring and probably protects the motor/basal body from shearing forces during rotation. This Shewanella frigidimarina (strain NCIMB 400) protein is Flagellar L-ring protein.